We begin with the raw amino-acid sequence, 336 residues long: Monoacylglycerol lipase ABHD6 (336 aa).

The Extracellular segment spans residues 1–8 (MDLDVVNM). The helical; Signal-anchor for type II membrane protein transmembrane segment at 9 to 29 (FVIAGGTLAIPILAFVASFLL) threads the bilayer. Residues 30–336 (WPSALIRIYY…VHNTDNKKLN (307 aa)) are Cytoplasmic-facing. The active-site Nucleophile is serine 148. Residues aspartate 278 and histidine 306 each act as charge relay system in the active site.

This sequence belongs to the AB hydrolase superfamily. As to expression, widely expressed with higher expression in small intestine, liver and brown adipose tissue. In brain, expressed postsynaptically in cortical neurons but not detected in microglia (at protein level).

It localises to the late endosome membrane. Its subcellular location is the lysosome membrane. The protein resides in the mitochondrion membrane. It catalyses the reaction Hydrolyzes glycerol monoesters of long-chain fatty acids.. It carries out the reaction 2-(5Z,8Z,11Z,14Z-eicosatetraenoyl)-glycerol + H2O = glycerol + (5Z,8Z,11Z,14Z)-eicosatetraenoate + H(+). The catalysed reaction is 1-octanoylglycerol + H2O = octanoate + glycerol + H(+). The enzyme catalyses 1-decanoylglycerol + H2O = decanoate + glycerol + H(+). It catalyses the reaction 1-dodecanoylglycerol + H2O = dodecanoate + glycerol + H(+). It carries out the reaction 1-tetradecanoylglycerol + H2O = tetradecanoate + glycerol + H(+). The catalysed reaction is 2-hexadecanoylglycerol + H2O = glycerol + hexadecanoate + H(+). The enzyme catalyses 2-(9Z-octadecenoyl)-glycerol + H2O = glycerol + (9Z)-octadecenoate + H(+). It catalyses the reaction 1-(9Z-octadecenoyl)-glycerol + H2O = glycerol + (9Z)-octadecenoate + H(+). It carries out the reaction 2-(9Z,12Z-octadecadienoyl)-glycerol + H2O = (9Z,12Z)-octadecadienoate + glycerol + H(+). The catalysed reaction is 1-(5Z,8Z,11Z,14Z-eicosatetraenoyl)-glycerol + H2O = glycerol + (5Z,8Z,11Z,14Z)-eicosatetraenoate + H(+). The enzyme catalyses 1-(9Z,12Z-octadecadienoyl)-glycerol + H2O = (9Z,12Z)-octadecadienoate + glycerol + H(+). It catalyses the reaction 3-(9Z-octadecenoyl)-sn-glycero-1-phospho-(3'-(9Z-octadecenoyl)-1'-sn-glycerol) + H2O = 3-(9Z-octadecenoyl)-sn-glycero-1-phospho-(1'-sn-glycerol) + (9Z)-octadecenoate + H(+). It carries out the reaction (S,S)-2-(9Z-octadecenoyl)-sn-glycero-1-phospho-(2'-(9Z-octadecenoyl)-1'-sn-glycerol) + H2O = (S,S)-2-(9Z-octadecenoyl)-sn-glycero-1-phospho-(1'-sn-glycerol) + (9Z)-octadecenoate + H(+). The catalysed reaction is (R,R)-2-(9Z-octadecenoyl)-sn-glycero-3-phospho-(2'-(9Z-octadecenoyl)-3'-sn-glycerol) + H2O = (R,R)-2-(9Z-octadecenoyl)-sn-glycero-3-phospho-(3'-sn-glycerol) + (9Z)-octadecenoate + H(+). Its function is as follows. Lipase that preferentially hydrolysis medium-chain saturated monoacylglycerols including 2-arachidonoylglycerol. Through 2-arachidonoylglycerol degradation may regulate endocannabinoid signaling pathways. Also has a lysophosphatidyl lipase activity with a preference for lysophosphatidylglycerol among other lysophospholipids. Also able to degrade bis(monoacylglycero)phosphate (BMP) and constitutes the major enzyme for BMP catabolism. BMP, also known as lysobisphosphatidic acid, is enriched in late endosomes and lysosomes and plays a key role in the formation of intraluminal vesicles and in lipid sorting. This chain is Monoacylglycerol lipase ABHD6, found in Mus musculus (Mouse).